The chain runs to 239 residues: Uridylate kinase (239 aa).

Position 13 to 16 (13 to 16 (KLSG)) interacts with ATP. Gly-55 contacts UMP. ATP-binding residues include Gly-56 and Arg-60. UMP contacts are provided by residues Asp-75 and 136 to 143 (TGNPFFTT). Positions 163, 164, 169, and 172 each coordinate ATP.

Belongs to the UMP kinase family. Homohexamer.

It localises to the cytoplasm. The catalysed reaction is UMP + ATP = UDP + ADP. It functions in the pathway pyrimidine metabolism; CTP biosynthesis via de novo pathway; UDP from UMP (UMPK route): step 1/1. Inhibited by UTP. Its function is as follows. Catalyzes the reversible phosphorylation of UMP to UDP. The chain is Uridylate kinase from Neisseria meningitidis serogroup C / serotype 2a (strain ATCC 700532 / DSM 15464 / FAM18).